A 747-amino-acid chain; its full sequence is Endopolyphosphatase (747 aa).

Met1 is a topological domain (cytoplasmic). Residues 2-22 (LPKTLTIWASLASLAVAQSGQ) traverse the membrane as a helical; Signal-anchor for type II membrane protein segment. Residues 23-747 (VVFAKNADGK…AEYLEEPDDD (725 aa)) lie on the Vacuolar side of the membrane. N-linked (GlcNAc...) asparagine glycans are attached at residues Asn134, Asn191, and Asn463. The tract at residues 570–640 (AVATSSEPES…PKFPKDLQPG (71 aa)) is disordered. A compositionally biased stretch (acidic residues) spans 577-586 (PESDDYDSDL). The segment covering 591–625 (KKGKKKGKKGKKGKKGKKGKKKKGKKGKKGKKGKR) has biased composition (basic residues). Basic and acidic residues predominate over residues 626–635 (DKSMPPKFPK). Asn659 carries an N-linked (GlcNAc...) asparagine glycan.

The protein belongs to the endopolyphosphatase PPN1 family. It depends on a divalent metal cation as a cofactor. Processing by proteases in the vacuole may be required for activation.

It is found in the vacuole membrane. The catalysed reaction is [phosphate](n+1) + n H2O = (n+1) phosphate + n H(+). In terms of biological role, catalyzes the hydrolysis of inorganic polyphosphate (polyP) chains of many hundreds of phosphate residues into shorter lengths. This Yarrowia lipolytica (strain CLIB 122 / E 150) (Yeast) protein is Endopolyphosphatase (PPN1).